The sequence spans 312 residues: 4-diphosphocytidyl-2-C-methyl-D-erythritol kinase (312 aa).

Residue K18 is part of the active site. 104-114 (PIAGGMGGGSA) provides a ligand contact to ATP. D146 is a catalytic residue.

It belongs to the GHMP kinase family. IspE subfamily.

It carries out the reaction 4-CDP-2-C-methyl-D-erythritol + ATP = 4-CDP-2-C-methyl-D-erythritol 2-phosphate + ADP + H(+). It participates in isoprenoid biosynthesis; isopentenyl diphosphate biosynthesis via DXP pathway; isopentenyl diphosphate from 1-deoxy-D-xylulose 5-phosphate: step 3/6. In terms of biological role, catalyzes the phosphorylation of the position 2 hydroxy group of 4-diphosphocytidyl-2C-methyl-D-erythritol. The polypeptide is 4-diphosphocytidyl-2-C-methyl-D-erythritol kinase (Clavibacter michiganensis subsp. michiganensis (strain NCPPB 382)).